A 243-amino-acid chain; its full sequence is Transmembrane protein 176A (243 aa).

At serine 42 the chain carries Phosphoserine. The next 4 helical transmembrane spans lie at 65–85 (WVVQIVLGILSVVLGGILYIC), 92–112 (TQGAPFWTGIVAMLAGAVAFL), 122–142 (ALMRILLVLASFCTAVAAIVI), and 204–224 (LLGVWVLLLLASLIPVCVYLW).

It belongs to the TMEM176 family. As to quaternary structure, interacts with MCOLN2.

The protein resides in the membrane. This is Transmembrane protein 176A (Tmem176a) from Rattus norvegicus (Rat).